The chain runs to 263 residues: Hatching enzyme 1.2 (263 aa).

The N-terminal stretch at 1–19 (MDIRASLSILLLLFGLSQA) is a signal peptide. Positions 20–64 (SPLREFEAIFVSEPETVDITTQILETNKGSSEVLFEGDVVLPKNR) are cleaved as a propeptide — activation peptide. The 199-residue stretch at 65–263 (NALICEDKSC…ILRINKLYGC (199 aa)) folds into the Peptidase M12A domain. 3 disulfide bridges follow: Cys-69–Cys-74, Cys-114–Cys-263, and Cys-135–Cys-155. His-163 provides a ligand contact to Zn(2+). The active site involves Glu-164. His-167 and His-173 together coordinate Zn(2+).

Zn(2+) serves as cofactor. As to expression, expressed in cells of the hatching gland.

The protein localises to the secreted. The enzyme catalyses Hydrolysis of the inner layer of fish egg envelope. Also hydrolysis of casein and small molecule substrates such as succinyl-Leu-Leu-Val-Tyr-|-7-(4-methyl)coumarylamide.. Its function is as follows. Metalloendopeptidase which participates in the breakdown of the egg envelope at the time of hatching. Cleaves the N-terminal regions of the zona pellucia glycoproteins ZP2 and ZP3, where it specifically recognizes the peptide sequences TVQQS-|-DYLIK (major site) and KLMLK-|-APEPF (minor site). The sequence is that of Hatching enzyme 1.2 from Danio rerio (Zebrafish).